The sequence spans 281 residues: 2-dehydro-3-deoxyphosphooctonate aldolase (281 aa).

This sequence belongs to the KdsA family.

The protein resides in the cytoplasm. The enzyme catalyses D-arabinose 5-phosphate + phosphoenolpyruvate + H2O = 3-deoxy-alpha-D-manno-2-octulosonate-8-phosphate + phosphate. The protein operates within carbohydrate biosynthesis; 3-deoxy-D-manno-octulosonate biosynthesis; 3-deoxy-D-manno-octulosonate from D-ribulose 5-phosphate: step 2/3. It functions in the pathway bacterial outer membrane biogenesis; lipopolysaccharide biosynthesis. In Pseudomonas fluorescens (strain SBW25), this protein is 2-dehydro-3-deoxyphosphooctonate aldolase.